The primary structure comprises 304 residues: Glutaminase (304 aa).

Positions 61, 113, 158, 165, 189, 240, and 258 each coordinate substrate.

The protein belongs to the glutaminase family. As to quaternary structure, homotetramer.

It carries out the reaction L-glutamine + H2O = L-glutamate + NH4(+). The sequence is that of Glutaminase from Fusobacterium nucleatum subsp. nucleatum (strain ATCC 25586 / DSM 15643 / BCRC 10681 / CIP 101130 / JCM 8532 / KCTC 2640 / LMG 13131 / VPI 4355).